Consider the following 171-residue polypeptide: Flavodoxin (171 aa).

Residues 4-166 (IGLFVGTTTG…RIKEWVKQLK (163 aa)) form the Flavodoxin-like domain.

This sequence belongs to the flavodoxin family. The cofactor is FMN.

Its function is as follows. Low-potential electron donor to a number of redox enzymes. This chain is Flavodoxin (fld), found in Trichodesmium erythraeum (strain IMS101).